The primary structure comprises 1060 residues: Carbamoyl phosphate synthase large chain (1060 aa).

Residues 1–401 (MPKRTDIRKI…SLLKACRSLE (401 aa)) are carboxyphosphate synthetic domain. ATP-binding residues include R129, R169, G175, G176, R208, I210, E215, G241, I242, H243, Q284, and E298. In terms of domain architecture, ATP-grasp 1 spans 133 to 327 (KQLMEELNQP…IAKLAAKIAV (195 aa)). Residues Q284, E298, and N300 each contribute to the Mg(2+) site. The Mn(2+) site is built by Q284, E298, and N300. The segment at 402–546 (IGVDHIKIAD…YSTYAVENES (145 aa)) is oligomerization domain. The tract at residues 547–929 (LISDKASILV…ALYKAFEAAY (383 aa)) is carbamoyl phosphate synthetic domain. In terms of domain architecture, ATP-grasp 2 spans 671–861 (EATLQALNIP…MAQVATKVIL (191 aa)). 10 residues coordinate ATP: R707, A746, L748, E752, G777, V778, H779, S780, Q820, and E832. Residues Q820, E832, and N834 each contribute to the Mg(2+) site. Residues Q820, E832, and N834 each coordinate Mn(2+). One can recognise an MGS-like domain in the interval 930–1060 (LHMPDYGNIV…SRAFTLKVLD (131 aa)). The interval 930–1060 (LHMPDYGNIV…SRAFTLKVLD (131 aa)) is allosteric domain.

This sequence belongs to the CarB family. As to quaternary structure, composed of two chains; the small (or glutamine) chain promotes the hydrolysis of glutamine to ammonia, which is used by the large (or ammonia) chain to synthesize carbamoyl phosphate. Tetramer of heterodimers (alpha,beta)4. Mg(2+) serves as cofactor. Mn(2+) is required as a cofactor.

The catalysed reaction is hydrogencarbonate + L-glutamine + 2 ATP + H2O = carbamoyl phosphate + L-glutamate + 2 ADP + phosphate + 2 H(+). It carries out the reaction hydrogencarbonate + NH4(+) + 2 ATP = carbamoyl phosphate + 2 ADP + phosphate + 2 H(+). It participates in amino-acid biosynthesis; L-arginine biosynthesis; carbamoyl phosphate from bicarbonate: step 1/1. It functions in the pathway pyrimidine metabolism; UMP biosynthesis via de novo pathway; (S)-dihydroorotate from bicarbonate: step 1/3. Large subunit of the glutamine-dependent carbamoyl phosphate synthetase (CPSase). CPSase catalyzes the formation of carbamoyl phosphate from the ammonia moiety of glutamine, carbonate, and phosphate donated by ATP, constituting the first step of 2 biosynthetic pathways, one leading to arginine and/or urea and the other to pyrimidine nucleotides. The large subunit (synthetase) binds the substrates ammonia (free or transferred from glutamine from the small subunit), hydrogencarbonate and ATP and carries out an ATP-coupled ligase reaction, activating hydrogencarbonate by forming carboxy phosphate which reacts with ammonia to form carbamoyl phosphate. In Streptococcus agalactiae serotype Ia (strain ATCC 27591 / A909 / CDC SS700), this protein is Carbamoyl phosphate synthase large chain.